The chain runs to 329 residues: Phospholipid scramblase 4 (329 aa).

The interval 1 to 51 (MSGVVPTAPEQPAGEMENQTKPPDPRPDAPPEYNSHFLPGPPGTAVPPPTG) is disordered. Positions 1-98 (MSGVVPTAPE…PMPNQSVPIT (98 aa)) are proline-rich domain (PRD). The Cytoplasmic portion of the chain corresponds to 1–303 (MSGVVPTAPE…IHFPLDLDVK (303 aa)). The SH3-binding 1 motif lies at 18 to 25 (NQTKPPDP). A PPxY motif motif is present at residues 30–33 (PPEY). Residues 39 to 51 (PGPPGTAVPPPTG) show a composition bias toward pro residues. Positions 41 to 49 (PPGTAVPPP) match the SH3-binding 2 motif. 2 positions are modified to phosphotyrosine; by ABL: Tyr-83 and Tyr-88. An SH3-binding 3 motif is present at residues 98–106 (TWMPGPTPM). Residues Cys-197, Cys-198, Cys-199, Cys-201, and Cys-202 are each lipidated (S-palmitoyl cysteine). Residues 271 to 283 (NIGSIIRKWNGLL) carry the Nuclear localization signal motif. A helical membrane pass occupies residues 304 to 320 (MKAMIFGACFLIDFMYF). The Extracellular segment spans residues 321 to 329 (ERSPPQRSR).

This sequence belongs to the phospholipid scramblase family. As to quaternary structure, interacts with PDCD6. Interacts with KPNA2; this interaction mediates the nucleus import of PLSCR4. Ca(2+) serves as cofactor. Mg(2+) is required as a cofactor. The cofactor is Zn(2+). As to expression, expressed in heart, brain, placenta, lung, liver, kidney, pancreas, spleen, thymus, prostate, testis, uterus, small intestine and colon. Not detected in peripheral blood lymphocytes.

Its subcellular location is the cell membrane. The protein resides in the nucleus. It carries out the reaction a 1,2-diacyl-sn-glycero-3-phosphocholine(in) = a 1,2-diacyl-sn-glycero-3-phosphocholine(out). It catalyses the reaction a 1,2-diacyl-sn-glycero-3-phospho-L-serine(in) = a 1,2-diacyl-sn-glycero-3-phospho-L-serine(out). Functionally, catalyzes metal ion-induced ATP-independent rapid bidirectional and non-specific movement of phospholipids (lipid scrambling or lipid flip-flop) between the inner and outer leaflet of the plasma membrane and participates in the redistribution of phospholipids between membrane leaflets. Metal ions bind to the calcium-binding site and induce conformation change in the protein. Has a greater affi nity for Ca(2+) than Mg(2+) and Zn(2+). This Homo sapiens (Human) protein is Phospholipid scramblase 4.